The sequence spans 441 residues: Probable indole-3-acetic acid-amido synthetase GH3.9 (441 aa).

It belongs to the IAA-amido conjugating enzyme family. Expressed in etiolated seedlings and roots.

Functionally, may catalyze the synthesis of indole-3-acetic acid (IAA)-amino acid conjugates, providing a mechanism for the plant to cope with the presence of excess auxin. The protein is Probable indole-3-acetic acid-amido synthetase GH3.9 (GH3.9) of Oryza sativa subsp. japonica (Rice).